The following is an 89-amino-acid chain: Small ribosomal subunit protein uS15 (89 aa).

This sequence belongs to the universal ribosomal protein uS15 family. In terms of assembly, part of the 30S ribosomal subunit. Forms a bridge to the 50S subunit in the 70S ribosome, contacting the 23S rRNA.

In terms of biological role, one of the primary rRNA binding proteins, it binds directly to 16S rRNA where it helps nucleate assembly of the platform of the 30S subunit by binding and bridging several RNA helices of the 16S rRNA. Forms an intersubunit bridge (bridge B4) with the 23S rRNA of the 50S subunit in the ribosome. The chain is Small ribosomal subunit protein uS15 from Thermus thermophilus (strain ATCC BAA-163 / DSM 7039 / HB27).